The chain runs to 208 residues: Thymidylate kinase (208 aa).

10–17 provides a ligand contact to ATP; the sequence is GPEGSGKT.

This sequence belongs to the thymidylate kinase family.

It catalyses the reaction dTMP + ATP = dTDP + ADP. Its function is as follows. Phosphorylation of dTMP to form dTDP in both de novo and salvage pathways of dTTP synthesis. The protein is Thymidylate kinase of Bacillus anthracis.